Here is a 316-residue protein sequence, read N- to C-terminus: Transaldolase (316 aa).

The active-site Schiff-base intermediate with substrate is Lys-132.

The protein belongs to the transaldolase family. Type 1 subfamily.

The protein localises to the cytoplasm. The catalysed reaction is D-sedoheptulose 7-phosphate + D-glyceraldehyde 3-phosphate = D-erythrose 4-phosphate + beta-D-fructose 6-phosphate. It participates in carbohydrate degradation; pentose phosphate pathway; D-glyceraldehyde 3-phosphate and beta-D-fructose 6-phosphate from D-ribose 5-phosphate and D-xylulose 5-phosphate (non-oxidative stage): step 2/3. Its function is as follows. Transaldolase is important for the balance of metabolites in the pentose-phosphate pathway. This is Transaldolase from Methylomonas aminofaciens.